The sequence spans 384 residues: Probable inactive patatin-like protein 9 (384 aa).

The PNPLA domain occupies 33 to 234; the sequence is LSIDGGGTTG…VMNNPTAAAV (202 aa). Positions 37–42 match the GXGXXG motif; sequence GGGTTG. Residue Asp-221 is the Proton acceptor of the active site. The DGA/G signature appears at 221-223; the sequence is DGG. The tract at residues 363-384 is disordered; the sequence is GKSSLPPSPCKESAVNPLADGR.

It belongs to the patatin family. Highly expressed in roots and at lower levels in flowers and siliques.

In Arabidopsis thaliana (Mouse-ear cress), this protein is Probable inactive patatin-like protein 9 (PLP9).